The sequence spans 156 residues: Small ribosomal subunit protein uS7A/uS7B (156 aa).

This sequence belongs to the universal ribosomal protein uS7 family. In terms of assembly, part of the 30S ribosomal subunit. Contacts proteins S9 and S11.

In terms of biological role, one of the primary rRNA binding proteins, it binds directly to 16S rRNA where it nucleates assembly of the head domain of the 30S subunit. Is located at the subunit interface close to the decoding center, probably blocks exit of the E-site tRNA. The protein is Small ribosomal subunit protein uS7A/uS7B of Cereibacter sphaeroides (strain ATCC 17029 / ATH 2.4.9) (Rhodobacter sphaeroides).